The following is a 786-amino-acid chain: Progesterone receptor (786 aa).

Over residues 1-10 the composition is skewed to basic and acidic residues; sequence MTEVKSKETR. Disordered regions lie at residues 1–95, 110–212, and 252–279; these read MTEV…SKDC, AAPW…ASPA, and SAFG…DGKE. Positions 1–420 are modulating, Pro-Rich; it reads MTEVKSKETR…YSFESLPQKI (420 aa). Lysine 7 participates in a covalent cross-link: Glycyl lysine isopeptide (Lys-Gly) (interchain with G-Cter in SUMO). A compositionally biased stretch (acidic residues) spans 48–79; it reads DEEEEEEENEEEEEEEEPQQREEEEEEEEEDR. Over residues 143-154 the composition is skewed to pro residues; it reads APGPSQPRPGAP. Positions 186-197 are enriched in basic and acidic residues; the sequence is AEERGFPERDAG. Positions 203 to 212 are enriched in low complexity; that stretch reads LAPAAAASPA. A phosphoserine mark is found at serine 210 and serine 259. A Glycyl lysine isopeptide (Lys-Gly) (interchain with G-Cter in SUMO); alternate cross-link involves residue lysine 294. Residue lysine 294 forms a Glycyl lysine isopeptide (Lys-Gly) (interchain with G-Cter in ubiquitin); alternate linkage. A Glycyl lysine isopeptide (Lys-Gly) (interchain with G-Cter in SUMO) cross-link involves residue lysine 385. 2 NR C4-type zinc fingers span residues 421 to 441 and 457 to 481; these read CLIC…CGSC and CAGR…LRKC. The nuclear receptor DNA-binding region spans 421 to 486; it reads CLICGDEASG…RLRKCCQAGM (66 aa). Serine 529 is modified (phosphoserine). The 235-residue stretch at 532–766 folds into the NR LBD domain; that stretch reads QEIPFVPPMI…EFPEMMSEVI (235 aa).

The protein belongs to the nuclear hormone receptor family. NR3 subfamily. Phosphorylation of Ser-529 is sharply increased upon progesterone treatment, whereas phosphorylation of Ser-210 and Ser-259 is modestly induced by progesterone. In terms of processing, ubiquitinated. Ubiquitination is increased by progesterone and represses sumoylation at the same site. Post-translationally, sumoylation is hormone-dependent and represses transcriptional activity. Sumoylation on all three sites is enhanced by PIAS3. Desumoylated by SENP1. Sumoylation on Lys-385, the main site of sumoylation, is repressed by ubiquitination on the same site. As to expression, oviduct and bursa of Fabricius.

It localises to the nucleus. It is found in the cytoplasm. Its function is as follows. The steroid hormones and their receptors are involved in the regulation of eukaryotic gene expression and affect cellular proliferation and differentiation in target tissues. In Gallus gallus (Chicken), this protein is Progesterone receptor (PGR).